We begin with the raw amino-acid sequence, 278 residues long: MLAKRIIPCLDVKDGRVVKGVNFLNLRDAGDPVENALYYNEEEADELVFLDVTASHEKRKIIIDVVERTASVVFMPLTVGGGIKSLDDIRDLLNAGADKVSINTTAVKDPYFIQKASTRFGSQCIVIAIDAKRVDKNFNPKAYPPESWFDDKELSDVLYKEDSRFVLSTHGGRLMRPIDAIAWAKKMEEFGAGEILLTSMDRDGTKEGYDIELTRAISEAVSIPVIASGGAGTLEHLYEAFAYAKADAALAASIFHFREYSIREAKEFLRQKGIPVRI.

Residues Asp-11 and Asp-130 contribute to the active site.

This sequence belongs to the HisA/HisF family. In terms of assembly, heterodimer of HisH and HisF.

It localises to the cytoplasm. It carries out the reaction 5-[(5-phospho-1-deoxy-D-ribulos-1-ylimino)methylamino]-1-(5-phospho-beta-D-ribosyl)imidazole-4-carboxamide + L-glutamine = D-erythro-1-(imidazol-4-yl)glycerol 3-phosphate + 5-amino-1-(5-phospho-beta-D-ribosyl)imidazole-4-carboxamide + L-glutamate + H(+). Its pathway is amino-acid biosynthesis; L-histidine biosynthesis; L-histidine from 5-phospho-alpha-D-ribose 1-diphosphate: step 5/9. In terms of biological role, IGPS catalyzes the conversion of PRFAR and glutamine to IGP, AICAR and glutamate. The HisF subunit catalyzes the cyclization activity that produces IGP and AICAR from PRFAR using the ammonia provided by the HisH subunit. The sequence is that of Imidazole glycerol phosphate synthase subunit HisF from Thermodesulfovibrio yellowstonii (strain ATCC 51303 / DSM 11347 / YP87).